The sequence spans 308 residues: Taste receptor type 2 member 41 (308 aa).

Over methionine 1–valine 7 the chain is Extracellular. Residues phenylalanine 8–valine 28 traverse the membrane as a helical segment. Residues leucine 29–cysteine 60 are Cytoplasmic-facing. A helical transmembrane segment spans residues valine 61–alanine 81. Residues arginine 82–histidine 88 are Extracellular-facing. The chain crosses the membrane as a helical span at residues tryptophan 89 to isoleucine 109. Topologically, residues lysine 110 to alanine 128 are cytoplasmic. Residues leucine 129–phenylalanine 149 form a helical membrane-spanning segment. The Extracellular portion of the chain corresponds to tryptophan 150–lysine 186. Residues asparagine 152 and asparagine 167 are each glycosylated (N-linked (GlcNAc...) asparagine). A helical membrane pass occupies residues valine 187 to serine 207. Over leucine 208–serine 239 the chain is Cytoplasmic. Residues phenylalanine 240 to serine 260 traverse the membrane as a helical segment. Topologically, residues serine 261 to valine 264 are extracellular. A helical membrane pass occupies residues tryptophan 265–isoleucine 285. Residues threonine 286–alanine 308 lie on the Cytoplasmic side of the membrane.

Belongs to the G-protein coupled receptor T2R family. Expressed in subsets of taste receptor cells of the tongue and palate epithelium and exclusively in gustducin-positive cells.

The protein localises to the membrane. In terms of biological role, receptor that may play a role in the perception of bitterness and is gustducin-linked. May play a role in sensing the chemical composition of the gastrointestinal content. The activity of this receptor may stimulate alpha gustducin, mediate PLC-beta-2 activation and lead to the gating of TRPM5. The chain is Taste receptor type 2 member 41 (Tas2r41) from Mus musculus (Mouse).